The chain runs to 842 residues: MVAFTIEQIRELMDKVTNVRNMSVIAHVDHGKSTLTDSLVQRAGIISAAKAGEARFTDTRKDEQERGITIKSTAISLYASMTDDDCKEIQQKTVGNSFLINLIDSPGHVDFSSEVTAALRVTDGALVVVDCVEGVCVQTETVLRQALGERIKPVVIINKVDRALLELQVTKEDLYQSFSRTIESVNVIISTYVDSSLGDSQVYPDKGTVAFGSGLHGWAFTVRQFATRYSKKFGVDRIKMMERLWGDSYFNPKTKKWTNKDKDAEGKTLERAFNMFVLDPIFRLFSSIMNFKKSEIPTLLEKLEINLKAEEKELEGKALLKVVMRKFLPAADALLEMIVIHLPSPVTAQAYRAETLYEGPADDASCIAIKNCDPTADLMVYISKMVPTSDKGRFYAFGRVFAGTVKSGQKVRIQGPNYQVGKKDDLFVKAIQRTVLMMGRFVEAIDDCPAGNIVGLVGVDQFLLKSGTITTNEASHNMKVMKFSVSPVVQVAVEVKNANDLPKLVEGLKRLSKSDPCVLTSMSESGEHIVAATGELHLEICLSDLQNDHAGIPLKISPPIVSYRETVNAESSMVALSKSPNKHNRIYVKAQPIDEEVSLDIEKGVINPRDDFKARARILADNHGWDVTDARKIWCFGPDGNGPNLVVDQTKAVQYLNEIKDSVVAAFQWATKEGPIFGENVRSVRVNILDVTLHADAIHRGGGQIIPTMRRVTYASMLLAEPAIQEPVFLVEIQCPENAIGGIYSVLNKKRGQVISEEQRPGTPLFTVKAYLPVNESFGFSGELRQSTGGQAFPQLIFDHWANLNGDPTDPTSKVGTIVKEKRERQGMKPDVPGYEEYYDKL.

The tr-type G domain maps to 17 to 253; it reads TNVRNMSVIA…LWGDSYFNPK (237 aa). Residues 26–33, 158–161, and 213–215 contribute to the GTP site; these read AHVDHGKS, NKVD, and SGL. At H699 the chain carries Diphthamide.

Belongs to the TRAFAC class translation factor GTPase superfamily. Classic translation factor GTPase family. EF-G/EF-2 subfamily.

It is found in the cytoplasm. It catalyses the reaction GTP + H2O = GDP + phosphate + H(+). Catalyzes the GTP-dependent ribosomal translocation step during translation elongation. During this step, the ribosome changes from the pre-translocational (PRE) to the post-translocational (POST) state as the newly formed A-site-bound peptidyl-tRNA and P-site-bound deacylated tRNA move to the P and E sites, respectively. Catalyzes the coordinated movement of the two tRNA molecules, the mRNA and conformational changes in the ribosome. The protein is Elongation factor 2 (EFT1) of Debaryomyces hansenii (strain ATCC 36239 / CBS 767 / BCRC 21394 / JCM 1990 / NBRC 0083 / IGC 2968) (Yeast).